Reading from the N-terminus, the 131-residue chain is UPF0212 protein TK1194 (131 aa).

The protein belongs to the UPF0212 family.

This is UPF0212 protein TK1194 from Thermococcus kodakarensis (strain ATCC BAA-918 / JCM 12380 / KOD1) (Pyrococcus kodakaraensis (strain KOD1)).